The chain runs to 149 residues: Mediator of RNA polymerase II transcription subunit 9 (149 aa).

Positions 18-64 (TNPTLDKPNAEATKEEFSSAENRDEKDYLTNQQPKNLSTPSTSSNGE) are disordered. Residues 25–45 (PNAEATKEEFSSAENRDEKDY) are compositionally biased toward basic and acidic residues. The segment covering 46-63 (LTNQQPKNLSTPSTSSNG) has biased composition (polar residues). 2 consecutive short sequence motifs (nuclear localization signal) follow at residues 77 to 99 (RKDP…HRLK) and 136 to 149 (KRDV…KLQR).

It belongs to the Mediator complex subunit 9 family. In terms of assembly, component of the Mediator complex, which is composed of at least 21 subunits that form three structurally distinct submodules. The Mediator head module contains MED6, MED8, MED11, SRB4/MED17, SRB5/MED18, ROX3/MED19, SRB2/MED20 and SRB6/MED22, the middle module contains MED1, MED4, NUT1/MED5, MED7, CSE2/MED9, NUT2/MED10, SRB7/MED21 and SOH1/MED31, and the tail module contains MED2, PGD1/MED3, RGR1/MED14, GAL11/MED15 and SIN4/MED16. The head and the middle modules interact directly with RNA polymerase II, whereas the elongated tail module interacts with gene-specific regulatory proteins. CSE2/MED9 interacts directly with MED4.

The protein resides in the nucleus. Component of the Mediator complex, a coactivator involved in the regulated transcription of nearly all RNA polymerase II-dependent genes. Mediator functions as a bridge to convey information from gene-specific regulatory proteins to the basal RNA polymerase II transcription machinery. The Mediator complex, having a compact conformation in its free form, is recruited to promoters by direct interactions with regulatory proteins and serves for the assembly of a functional preinitiation complex with RNA polymerase II and the general transcription factors. The Mediator complex unfolds to an extended conformation and partially surrounds RNA polymerase II, specifically interacting with the unphosphorylated form of the C-terminal domain (CTD) of RNA polymerase II. The Mediator complex dissociates from the RNA polymerase II holoenzyme and stays at the promoter when transcriptional elongation begins. The sequence is that of Mediator of RNA polymerase II transcription subunit 9 (CSE2) from Saccharomyces cerevisiae (strain ATCC 204508 / S288c) (Baker's yeast).